Here is a 234-residue protein sequence, read N- to C-terminus: Ribonuclease 3 (234 aa).

The RNase III domain occupies 13 to 136 (YITLEKALGY…LMAGVYLEAG (124 aa)). Position 49 (glutamate 49) interacts with Mg(2+). Aspartate 53 is a catalytic residue. The Mg(2+) site is built by serine 122 and glutamate 125. Glutamate 125 is a catalytic residue. Positions 163 to 232 (DYKTALQELT…AYQALQKLKG (70 aa)) constitute a DRBM domain.

It belongs to the ribonuclease III family. Homodimer. It depends on Mg(2+) as a cofactor.

The protein resides in the cytoplasm. The enzyme catalyses Endonucleolytic cleavage to 5'-phosphomonoester.. In terms of biological role, digests double-stranded RNA. Involved in the processing of primary rRNA transcript to yield the immediate precursors to the large and small rRNAs (23S and 16S). Processes some mRNAs, and tRNAs when they are encoded in the rRNA operon. Processes pre-crRNA and tracrRNA of type II CRISPR loci if present in the organism. This Helicobacter acinonychis (strain Sheeba) protein is Ribonuclease 3.